The primary structure comprises 206 residues: Holliday junction branch migration complex subunit RuvA (206 aa).

Residues 1–64 (MIGRLSGTIL…EDAQLLYGFN (64 aa)) are domain I. The domain II stretch occupies residues 65–143 (KKSERELFRE…GWGEGDLFTP (79 aa)). Residues 144 to 157 (ASDAAASNAEIQKY) are flexible linker. Positions 158–206 (SSARAEDEAVSALIALGYKALQAAKVVSQVVKPEMSSENIIREALRSMV) are domain III.

This sequence belongs to the RuvA family. In terms of assembly, homotetramer. Forms an RuvA(8)-RuvB(12)-Holliday junction (HJ) complex. HJ DNA is sandwiched between 2 RuvA tetramers; dsDNA enters through RuvA and exits via RuvB. An RuvB hexamer assembles on each DNA strand where it exits the tetramer. Each RuvB hexamer is contacted by two RuvA subunits (via domain III) on 2 adjacent RuvB subunits; this complex drives branch migration. In the full resolvosome a probable DNA-RuvA(4)-RuvB(12)-RuvC(2) complex forms which resolves the HJ.

It localises to the cytoplasm. Its function is as follows. The RuvA-RuvB-RuvC complex processes Holliday junction (HJ) DNA during genetic recombination and DNA repair, while the RuvA-RuvB complex plays an important role in the rescue of blocked DNA replication forks via replication fork reversal (RFR). RuvA specifically binds to HJ cruciform DNA, conferring on it an open structure. The RuvB hexamer acts as an ATP-dependent pump, pulling dsDNA into and through the RuvAB complex. HJ branch migration allows RuvC to scan DNA until it finds its consensus sequence, where it cleaves and resolves the cruciform DNA. This chain is Holliday junction branch migration complex subunit RuvA, found in Photobacterium profundum (strain SS9).